The following is a 235-amino-acid chain: Ubiquinone biosynthesis O-methyltransferase (235 aa).

Residues R39, G59, D80, and M124 each contribute to the S-adenosyl-L-methionine site.

Belongs to the methyltransferase superfamily. UbiG/COQ3 family.

It catalyses the reaction a 3-demethylubiquinol + S-adenosyl-L-methionine = a ubiquinol + S-adenosyl-L-homocysteine + H(+). The enzyme catalyses a 3-(all-trans-polyprenyl)benzene-1,2-diol + S-adenosyl-L-methionine = a 2-methoxy-6-(all-trans-polyprenyl)phenol + S-adenosyl-L-homocysteine + H(+). Its pathway is cofactor biosynthesis; ubiquinone biosynthesis. O-methyltransferase that catalyzes the 2 O-methylation steps in the ubiquinone biosynthetic pathway. The chain is Ubiquinone biosynthesis O-methyltransferase from Vibrio vulnificus (strain CMCP6).